The chain runs to 467 residues: UDP-N-acetylmuramate--L-alanine ligase (467 aa).

114 to 120 (GTHGKTT) provides a ligand contact to ATP.

It belongs to the MurCDEF family.

It is found in the cytoplasm. The enzyme catalyses UDP-N-acetyl-alpha-D-muramate + L-alanine + ATP = UDP-N-acetyl-alpha-D-muramoyl-L-alanine + ADP + phosphate + H(+). It participates in cell wall biogenesis; peptidoglycan biosynthesis. In terms of biological role, cell wall formation. This is UDP-N-acetylmuramate--L-alanine ligase from Rhodopseudomonas palustris (strain BisB18).